The sequence spans 138 residues: Small ribosomal subunit protein uS11c (138 aa).

Residues 1 to 22 (MAKPIPKIGSRKNARSGSRKHL) form a disordered region. The segment covering 9–22 (GSRKNARSGSRKHL) has biased composition (basic residues).

Belongs to the universal ribosomal protein uS11 family. As to quaternary structure, part of the 30S ribosomal subunit.

It localises to the plastid. Its subcellular location is the chloroplast. This Lotus japonicus (Lotus corniculatus var. japonicus) protein is Small ribosomal subunit protein uS11c.